The sequence spans 400 residues: MAKEKFVRTKPHVNVGTIGHIDHGKSTLTAAITKYLSLKGLAQYVPYDQIDKAPEEKARGITINITHVEYQTEKRHYAHIDCPGHADYIKNMITGAAQMDGAILVVAATDGPMPQTREHVLLARQVEVPYMIVFINKTDMVDDPELIDLVEMEVRDLLSQYGYPGDEVPVIRGSALKAVEAPNDPNHEAYKPIQELLDAMDNYIPEPQREVDKPFLMPIEDVFSITGRGTVVTGRIERGRIKPGDEVEIIGLSYEIRKTVVTSVEMFRKELDEGIAGDNVGCLLRGIDKDEVERGQVLAAPGSIKPHKRFKAQVYVLKKEEGGRHTPFTKGYKPQFYIRTADVTGEIVGLPEGVEMVMPGDHVEMEIELIYPVAIEKGQRFAVREGGRTVGAGVVTEVIE.

A tr-type G domain is found at 10–208 (KPHVNVGTIG…AMDNYIPEPQ (199 aa)). Residues 19–26 (GHIDHGKS) form a G1 region. Residue 19–26 (GHIDHGKS) participates in GTP binding. Residue serine 26 coordinates Mg(2+). The G2 stretch occupies residues 60-64 (GITIN). Positions 81 to 84 (DCPG) are G3. Residues 81 to 85 (DCPGH) and 136 to 139 (NKTD) contribute to the GTP site. Residues 136–139 (NKTD) form a G4 region. The G5 stretch occupies residues 174-176 (SAL).

This sequence belongs to the TRAFAC class translation factor GTPase superfamily. Classic translation factor GTPase family. EF-Tu/EF-1A subfamily. As to quaternary structure, monomer.

Its subcellular location is the cytoplasm. The catalysed reaction is GTP + H2O = GDP + phosphate + H(+). GTP hydrolase that promotes the GTP-dependent binding of aminoacyl-tRNA to the A-site of ribosomes during protein biosynthesis. The chain is Elongation factor Tu from Thermotoga petrophila (strain ATCC BAA-488 / DSM 13995 / JCM 10881 / RKU-1).